The following is a 269-amino-acid chain: Hemin import ATP-binding protein HmuV (269 aa).

The region spanning 2–242 is the ABC transporter domain; that stretch reads LEVIHTGLNI…AMVEACFDLP (241 aa). 34 to 41 lines the ATP pocket; the sequence is GPNGAGKS.

The protein belongs to the ABC transporter superfamily. Heme (hemin) importer (TC 3.A.1.14.5) family. The complex is composed of two ATP-binding proteins (HmuV), two transmembrane proteins (HmuU) and a solute-binding protein (HmuT).

It localises to the cell inner membrane. Its function is as follows. Part of the ABC transporter complex HmuTUV involved in hemin import. Responsible for energy coupling to the transport system. The protein is Hemin import ATP-binding protein HmuV of Methylobacillus flagellatus (strain ATCC 51484 / DSM 6875 / VKM B-1610 / KT).